The following is a 220-amino-acid chain: MELYLDTANVAEVERLARIFPIAGVTTNPSIIAASKESIWEVLPRLQKAIGDEGILFAQTMSRDAQGMVEEAKRLRDAIPGIVVKIPVTSEGLAAIKILKKEGITTLGTAVYSAAQGLLAALAGAKYVAPYVNRVDAQGGDGIRTVQELQTLLEMHAPESMVLAASFKTPRQALDCLLAGCESITLPLDVAQQMLNTPAVESAIEKFEHDWNAAFGTTHL.

Residue K85 is the Schiff-base intermediate with substrate of the active site.

It belongs to the transaldolase family. Type 3A subfamily. Homodecamer.

The protein localises to the cytoplasm. It catalyses the reaction beta-D-fructose 6-phosphate = dihydroxyacetone + D-glyceraldehyde 3-phosphate. Functionally, catalyzes the reversible formation of fructose 6-phosphate from dihydroxyacetone and D-glyceraldehyde 3-phosphate via an aldolization reaction. Can utilize hydroxyacetone as an alternative donor substrate. Is also able to catalyze the direct self-aldol addition of glycolaldehyde. Is less catalytically efficient than the isozyme FsaA. Does not display transaldolase activity. The protein is Fructose-6-phosphate aldolase 2 (fsaB) of Escherichia coli (strain K12).